Here is a 262-residue protein sequence, read N- to C-terminus: Transcription factor Adf-1 (262 aa).

Positions 24-104 form a DNA-binding region, MADF; sequence NLIEAVKLNP…QMQFLVDSIR (81 aa). One can recognise a BESS domain in the interval 217-256; the sequence is SAEDQSFGMVVTDMLNTLGVRQKAEAKVHIIKYLTDMQLL.

Post-translationally, O-glycosylated; contains N-acetylglucosamine side chains.

The protein resides in the nucleus. In terms of biological role, may play an important role not only in the regulation of Adh expression but also in the transcription of other genes. The polypeptide is Transcription factor Adf-1 (Adf1) (Drosophila melanogaster (Fruit fly)).